The chain runs to 229 residues: Serine acetyltransferase (229 aa).

Belongs to the transferase hexapeptide repeat family.

Its subcellular location is the cytoplasm. The enzyme catalyses L-serine + acetyl-CoA = O-acetyl-L-serine + CoA. The protein operates within amino-acid biosynthesis; L-cysteine biosynthesis; L-cysteine from L-serine: step 1/2. In terms of biological role, catalyzes the acetylation of serine by acetyl-CoA to produce O-acetylserine (OAS). The polypeptide is Serine acetyltransferase (cysE) (Mycobacterium tuberculosis (strain ATCC 25618 / H37Rv)).